The chain runs to 634 residues: 1-deoxy-D-xylulose-5-phosphate synthase (634 aa).

Thiamine diphosphate-binding positions include histidine 74 and 115–117 (AHS). A Mg(2+)-binding site is contributed by aspartate 146. Residues 147 to 148 (GA), asparagine 176, tyrosine 283, and glutamate 365 contribute to the thiamine diphosphate site. Residue asparagine 176 participates in Mg(2+) binding.

Belongs to the transketolase family. DXPS subfamily. Homodimer. The cofactor is Mg(2+). Thiamine diphosphate serves as cofactor.

It catalyses the reaction D-glyceraldehyde 3-phosphate + pyruvate + H(+) = 1-deoxy-D-xylulose 5-phosphate + CO2. It functions in the pathway metabolic intermediate biosynthesis; 1-deoxy-D-xylulose 5-phosphate biosynthesis; 1-deoxy-D-xylulose 5-phosphate from D-glyceraldehyde 3-phosphate and pyruvate: step 1/1. In terms of biological role, catalyzes the acyloin condensation reaction between C atoms 2 and 3 of pyruvate and glyceraldehyde 3-phosphate to yield 1-deoxy-D-xylulose-5-phosphate (DXP). The sequence is that of 1-deoxy-D-xylulose-5-phosphate synthase from Burkholderia orbicola (strain MC0-3).